The sequence spans 258 residues: Trans-aconitate 2-methyltransferase (258 aa).

It belongs to the methyltransferase superfamily. Tam family.

Its subcellular location is the cytoplasm. It carries out the reaction trans-aconitate + S-adenosyl-L-methionine = (E)-3-(methoxycarbonyl)pent-2-enedioate + S-adenosyl-L-homocysteine. In terms of biological role, catalyzes the S-adenosylmethionine monomethyl esterification of trans-aconitate. The protein is Trans-aconitate 2-methyltransferase of Acidovorax ebreus (strain TPSY) (Diaphorobacter sp. (strain TPSY)).